The chain runs to 421 residues: DUF724 domain-containing protein 8 (421 aa).

Polar residues-rich tracts occupy residues 149–165 and 199–213; these read TQGS…NANE and PRNQ…TLEN. The disordered stretch occupies residues 149-229; the sequence is TQGSGDKTGD…NRKRKREENL (81 aa). A DUF724 domain is found at 246 to 420; that stretch reads VLPFEKKLRI…LEFLATASAP (175 aa). The stretch at 361-397 forms a coiled coil; that stretch reads EKVTAEKESVKAENKRKILELQRLNEEMDKEIAQSKS.

Expressed in leaves and flowers, and at lower levels in roots, stems and siliques.

The protein localises to the nucleus. May be involved in the polar growth of plant cells via transportation of RNAs. The sequence is that of DUF724 domain-containing protein 8 from Arabidopsis thaliana (Mouse-ear cress).